Reading from the N-terminus, the 236-residue chain is Peroxisomal membrane protein PMP27 (236 aa).

This sequence belongs to the peroxin-11 family. In terms of assembly, homooligomer. Interacts with PEX34.

The protein resides in the peroxisome membrane. Its function is as follows. Involved in peroxisomal proliferation. Promotes peroxisome division and biogenesis. The protein is Peroxisomal membrane protein PMP27 (PEX11) of Saccharomyces cerevisiae (strain ATCC 204508 / S288c) (Baker's yeast).